The following is a 110-amino-acid chain: ATP-dependent Clp protease adapter protein ClpS (110 aa).

Over residues 1–10 (MSDDRRRGDE) the composition is skewed to basic and acidic residues. A disordered region spans residues 1-27 (MSDDRRRGDEDGGAGTGVITKTKPKTK).

It belongs to the ClpS family. As to quaternary structure, binds to the N-terminal domain of the chaperone ClpA.

Functionally, involved in the modulation of the specificity of the ClpAP-mediated ATP-dependent protein degradation. In Parvibaculum lavamentivorans (strain DS-1 / DSM 13023 / NCIMB 13966), this protein is ATP-dependent Clp protease adapter protein ClpS.